The sequence spans 206 residues: Small ribosomal subunit protein uS4A (206 aa).

The 66-residue stretch at Met-98–Asn-163 folds into the S4 RNA-binding domain.

This sequence belongs to the universal ribosomal protein uS4 family. Part of the 30S ribosomal subunit. Contacts protein S5. The interaction surface between S4 and S5 is involved in control of translational fidelity.

Functionally, one of the primary rRNA binding proteins, it binds directly to 16S rRNA where it nucleates assembly of the body of the 30S subunit. With S5 and S12 plays an important role in translational accuracy. This is Small ribosomal subunit protein uS4A from Clostridium perfringens (strain SM101 / Type A).